A 279-amino-acid chain; its full sequence is Movement protein (279 aa).

The protein belongs to the cucumovirus movement protein family.

The protein localises to the host cell junction. The protein resides in the host plasmodesma. Transports viral genome to neighboring plant cells directly through plasmosdesmata, without any budding. The movement protein allows efficient cell to cell propagation, by bypassing the host cell wall barrier. Acts by forming a tubular structure at the host plasmodesmata, enlarging it enough to allow free passage of virion capsids. This chain is Movement protein, found in Cucumber mosaic virus (strain Kin) (CMV).